Consider the following 339-residue polypeptide: NADP-dependent dehydrogenase M3 (339 aa).

NADP(+) is bound by residues serine 49, isoleucine 51, aspartate 93, tyrosine 206, lysine 210, isoleucine 240, and glutamine 244. Residue tyrosine 206 is the Proton acceptor of the active site. Residue lysine 210 is the Lowers pKa of active site Tyr of the active site.

Belongs to the short-chain dehydrogenases/reductases (SDR) family. As to quaternary structure, homodimer.

The protein resides in the cytoplasm. The protein localises to the cytosol. The protein operates within secondary metabolite biosynthesis. NADP-dependent dehydrogenase; part of the gene cluster that mediates the biosynthesis of squalestatin S1 (SQS1, also known as zaragozic acid A), a heavily oxidized fungal polyketide that offers potent cholesterol lowering activity by targeting squalene synthase (SS). SQS1 is composed of a 2,8-dioxobicyclic[3.2.1]octane-3,4,5-tricarboxyclic acid core that is connected to two lipophilic polyketide arms. These initial steps feature the priming of an unusual benzoic acid starter unit onto the highly reducing polyketide synthase pks2, followed by oxaloacetate extension and product release to generate a tricarboxylic acid containing product. The phenylalanine ammonia lyase (PAL) M7 and the acyl-CoA ligase M9 are involved in transforming phenylalanine into benzoyl-CoA. The citrate synthase-like protein R3 is involved in connecting the C-alpha-carbons of the hexaketide chain and oxaloacetate to afford the tricarboxylic acid unit. The potential hydrolytic enzymes, M8 and M10, are in close proximity to pks2 and may participate in product release. On the other side, the tetraketide arm is synthesized by a the squalestatin tetraketide synthase pks1 and enzymatically esterified to the core in the last biosynthetic step, by the acetyltransferase M4. The biosynthesis of the tetraketide must involve 3 rounds of chain extension. After the first and second rounds methyl-transfer occurs, and in all rounds of extension the ketoreductase and dehydratase are active. The enoyl reductase and C-MeT of pks1 are not active in the final round of extension. The acetyltransferase M4 appears to have a broad substrate selectivity for its acyl CoA substrate, allowing the in vitro synthesis of novel squalestatins. The biosynthesis of SQS1 requires several oxidative steps likely performed by oxidoreductases M1, R1 and R2. Finally, in support of the identification of the cluster as being responsible for SQS1 production, the cluster contains a gene encoding a putative squalene synthase (SS) R6, suggesting a likely mechanism for self-resistance. This Phoma sp. (strain ATCC 20986 / MF5453) protein is NADP-dependent dehydrogenase M3.